A 390-amino-acid chain; its full sequence is Neuromedin-B receptor (390 aa).

A disordered region spans residues 1–20 (MPPRSLPNLSLPTEASESEL). At 1–41 (MPPRSLPNLSLPTEASESELEPEVWENDFLPDSDGTTAELV) the chain is on the extracellular side. A glycan (N-linked (GlcNAc...) asparagine) is linked at N8. Residues 42–65 (IRCVIPSLYLIIISVGLLGNIMLV) form a helical membrane-spanning segment. Topologically, residues 66–79 (KIFLTNSTMRSVPN) are cytoplasmic. A helical membrane pass occupies residues 80 to 99 (IFISNLAAGDLLLLLTCVPV). Residues 100–117 (DASRYFFDEWVFGKLGCK) lie on the Extracellular side of the membrane. An intrachain disulfide couples C116 to C198. Residues 118–139 (LIPAIQLTSVGVSVFTLTALSA) form a helical membrane-spanning segment. The Cytoplasmic portion of the chain corresponds to 140-156 (DRYRAIVNPMDMQTSGV). Residues 157–177 (VLWTSLKAVGIWVVSVLLAVP) traverse the membrane as a helical segment. Topologically, residues 178–211 (EAVFSEVARIGSSDNSSFTACIPYPQTDELHPKI) are extracellular. An N-linked (GlcNAc...) asparagine glycan is attached at N192. A helical transmembrane segment spans residues 212 to 235 (HSVLIFLVYFLIPLVIISIYYYHI). The Cytoplasmic segment spans residues 236–266 (AKTLIRSAHNLPGEYNEHTKKQMETRKRLAK). A helical membrane pass occupies residues 267–287 (IVLVFVGCFVFCWFPNHILYL). Topologically, residues 288–299 (YRSFNYKEIDPS) are extracellular. Residues 300–327 (LGHMIVTLVARVLSFSNSCVNPFALYLL) traverse the membrane as a helical segment. The Cytoplasmic segment spans residues 328-390 (SESFRKHFNS…GHSTKQEIAL (63 aa)). C341 carries S-palmitoyl cysteine lipidation. S352 carries the phosphoserine modification.

Belongs to the G-protein coupled receptor 1 family. Brain (olfactory bulb and central thalamic regions), and esophagus.

It localises to the cell membrane. In terms of biological role, receptor for neuromedin-B. Contributes to the maintenance of basal sigh rate through signaling in the pre-Botzinger complex, a cluster of several thousand neurons in the ventrolateral medulla responsible for inspiration during respiratory activity. Contributes to the induction of sneezing following exposure to chemical irritants or allergens which causes release of NMB by nasal sensory neurons and activation of NMBR-expressing neurons in the sneeze-evoking region of the brainstem. These in turn activate neurons of the caudal ventral respiratory group, giving rise to the sneezing response. Contributes to induction of acute itch, possibly through its activation on dorsal root ganglion neurons by the NMB peptide. Plays a role in the innate immune response to influenza A virus infection by enhancing interferon alpha expression and reducing expression of IL6. Plays a role in CSF1-induced proliferation of osteoclast precursors by contributing to the positive regulation of the expression of the CSF1 receptor CSF1R. This chain is Neuromedin-B receptor (Nmbr), found in Rattus norvegicus (Rat).